The sequence spans 210 residues: Small ribosomal subunit protein uS4 (210 aa).

Residues 99 to 170 form the S4 RNA-binding domain; it reads RRLDNAVFRA…NLEAVVRRGV (72 aa).

Belongs to the universal ribosomal protein uS4 family. As to quaternary structure, part of the 30S ribosomal subunit. Contacts protein S5. The interaction surface between S4 and S5 is involved in control of translational fidelity.

In terms of biological role, one of the primary rRNA binding proteins, it binds directly to 16S rRNA where it nucleates assembly of the body of the 30S subunit. With S5 and S12 plays an important role in translational accuracy. In Desulfotalea psychrophila (strain LSv54 / DSM 12343), this protein is Small ribosomal subunit protein uS4.